Here is a 185-residue protein sequence, read N- to C-terminus: NADH-dependent FMN reductase AsuE2 (185 aa).

The segment covering 1 to 13 has biased composition (low complexity); it reads MSTHTARRAGATA. The tract at residues 1-24 is disordered; it reads MSTHTARRAGATAGHDRDRGTEPG. Positions 14-24 are enriched in basic and acidic residues; it reads GHDRDRGTEPG.

This sequence belongs to the non-flavoprotein flavin reductase family. Does not interact with AsuE1, suggesting a possible transient interaction between the two enzymes instead of formation of a stable complex.

It carries out the reaction FMNH2 + NAD(+) = FMN + NADH + 2 H(+). It participates in antibiotic biosynthesis. In terms of biological role, involved in the biosynthesis of the antibiotic asukamycin. When flavin concentration is low, AsuE2 assists the protoasukamycin 4-monooxygenase AsuE1 by providing a reduced form of flavin, enhancing AsuE1 activity. The chain is NADH-dependent FMN reductase AsuE2 from Streptomyces nodosus subsp. asukaensis.